Here is a 215-residue protein sequence, read N- to C-terminus: Leucyl/phenylalanyl-tRNA--protein transferase (215 aa).

It belongs to the L/F-transferase family.

The protein resides in the cytoplasm. It catalyses the reaction N-terminal L-lysyl-[protein] + L-leucyl-tRNA(Leu) = N-terminal L-leucyl-L-lysyl-[protein] + tRNA(Leu) + H(+). The catalysed reaction is N-terminal L-arginyl-[protein] + L-leucyl-tRNA(Leu) = N-terminal L-leucyl-L-arginyl-[protein] + tRNA(Leu) + H(+). It carries out the reaction L-phenylalanyl-tRNA(Phe) + an N-terminal L-alpha-aminoacyl-[protein] = an N-terminal L-phenylalanyl-L-alpha-aminoacyl-[protein] + tRNA(Phe). Functions in the N-end rule pathway of protein degradation where it conjugates Leu, Phe and, less efficiently, Met from aminoacyl-tRNAs to the N-termini of proteins containing an N-terminal arginine or lysine. This Campylobacter jejuni subsp. doylei (strain ATCC BAA-1458 / RM4099 / 269.97) protein is Leucyl/phenylalanyl-tRNA--protein transferase.